The primary structure comprises 193 residues: Probable GTP-binding protein EngB (193 aa).

Positions 22 to 193 (MYPEISFIGR…ELWQIIEDLL (172 aa)) constitute an EngB-type G domain. Residues 30 to 37 (GRSNVGKS), 57 to 61 (GKTRT), 75 to 78 (DLPG), 142 to 145 (TKMD), and 174 to 176 (FSS) each bind GTP. Mg(2+) is bound by residues S37 and T59.

The protein belongs to the TRAFAC class TrmE-Era-EngA-EngB-Septin-like GTPase superfamily. EngB GTPase family. Requires Mg(2+) as cofactor.

Functionally, necessary for normal cell division and for the maintenance of normal septation. The protein is Probable GTP-binding protein EngB of Natranaerobius thermophilus (strain ATCC BAA-1301 / DSM 18059 / JW/NM-WN-LF).